The sequence spans 413 residues: MSFYEELKWRNLIKDCNNEIQVKELLDNNQVKFYCGFDPTSHSLTVGHLIQITMILLMQRQGHLPVILVGGATGLIGDPKETEERKLLSLENSLQNAKSIESQLKTILLNKQVEFVNNYQWLSQIDIISFLRNYGKFFNINYMLSKHVVAKRLASGISFTEFSYMILQSLDFHHLYKNHKVRLQLGGSDQWGNITSGLEIIRKLEKKSDALGVSTPLLLNSDGTKFGKSEKRVLWLNPLMTSPYEIYQYFLNVSDKEVINYLKMLTLIPKKGILELEKKTLENPQKRLAQKALTQSIINLIHSSDILQECIKTNQILFSNAKKESFQEKDFILLQKTLFCHSIKEDILLVDALVQTKLATSKSEAREFIKDNTIKLFNQKIKSLDFIITKENTLFGKYILLKKGKKNNALIVF.

An L-tyrosine-binding site is contributed by Tyr34. Positions 39–48 match the 'HIGH' region motif; sequence PTSHSLTVGH. 2 residues coordinate L-tyrosine: Tyr164 and Gln168. The 'KMSKS' region motif lies at 225 to 229; that stretch reads KFGKS. Lys228 lines the ATP pocket. The S4 RNA-binding domain occupies 347-413; sequence ILLVDALVQT…GKKNNALIVF (67 aa).

This sequence belongs to the class-I aminoacyl-tRNA synthetase family. TyrS type 1 subfamily. In terms of assembly, homodimer.

The protein localises to the cytoplasm. It carries out the reaction tRNA(Tyr) + L-tyrosine + ATP = L-tyrosyl-tRNA(Tyr) + AMP + diphosphate + H(+). In terms of biological role, catalyzes the attachment of tyrosine to tRNA(Tyr) in a two-step reaction: tyrosine is first activated by ATP to form Tyr-AMP and then transferred to the acceptor end of tRNA(Tyr). This Aster yellows witches'-broom phytoplasma (strain AYWB) protein is Tyrosine--tRNA ligase.